Reading from the N-terminus, the 187-residue chain is Cytokinin riboside 5'-monophosphate phosphoribohydrolase (187 aa).

Residues Glu80, 98-99, 115-121, and Thr127 each bind substrate; these read RK and GVGTLDE.

The protein belongs to the LOG family.

The enzyme catalyses N(6)-(dimethylallyl)adenosine 5'-phosphate + H2O = N(6)-dimethylallyladenine + D-ribose 5-phosphate. The catalysed reaction is 9-ribosyl-trans-zeatin 5'-phosphate + H2O = trans-zeatin + D-ribose 5-phosphate. Functionally, catalyzes the hydrolytic removal of ribose 5'-monophosphate from nitrogen N6-modified adenosines, the final step of bioactive cytokinin synthesis. The protein is Cytokinin riboside 5'-monophosphate phosphoribohydrolase of Mycobacterium marinum (strain ATCC BAA-535 / M).